Reading from the N-terminus, the 292-residue chain is High-affinity heme uptake system protein IsdE (292 aa).

Residues 1–19 (MRIIKYLTILVISVVILTS) form the signal peptide. A lipid anchor (N-palmitoyl cysteine) is attached at Cys-20. Cys-20 carries S-diacylglycerol cysteine lipidation. The Fe/B12 periplasmic-binding domain occupies 35-291 (RIVPTTVALT…QLYDLFYKDK (257 aa)). Val-41, Ala-42, Ser-60, Tyr-61, Met-78, and His-229 together coordinate heme.

The protein belongs to the bacterial solute-binding protein 8 family. Heme b is required as a cofactor.

It localises to the cell membrane. Functionally, involved in heme (porphyrin) scavenging. Binds Fe(2+) and Fe(3+) heme but the largest fraction is Fe(2+) heme. Functions as a high-affinity heme binding protein and probably has a role in relaying heme-iron from cell wall-anchored isd proteins receptors to the probable permease IsdF. This is High-affinity heme uptake system protein IsdE (isdE) from Staphylococcus aureus (strain MRSA252).